The primary structure comprises 332 residues: Glycerol-3-phosphate dehydrogenase [NAD(P)+] (332 aa).

S11, W12, R32, R33, and K106 together coordinate NADPH. 2 residues coordinate sn-glycerol 3-phosphate: K106 and G136. Residue A140 coordinates NADPH. Sn-glycerol 3-phosphate contacts are provided by K191, D244, S254, R255, and N256. K191 (proton acceptor) is an active-site residue. NADPH is bound at residue R255. 2 residues coordinate NADPH: V280 and E282.

This sequence belongs to the NAD-dependent glycerol-3-phosphate dehydrogenase family.

It localises to the cytoplasm. The enzyme catalyses sn-glycerol 3-phosphate + NAD(+) = dihydroxyacetone phosphate + NADH + H(+). The catalysed reaction is sn-glycerol 3-phosphate + NADP(+) = dihydroxyacetone phosphate + NADPH + H(+). It functions in the pathway membrane lipid metabolism; glycerophospholipid metabolism. In terms of biological role, catalyzes the reduction of the glycolytic intermediate dihydroxyacetone phosphate (DHAP) to sn-glycerol 3-phosphate (G3P), the key precursor for phospholipid synthesis. This chain is Glycerol-3-phosphate dehydrogenase [NAD(P)+], found in Corynebacterium kroppenstedtii (strain DSM 44385 / JCM 11950 / CIP 105744 / CCUG 35717).